The primary structure comprises 137 residues: Large ribosomal subunit protein uL16 (137 aa).

The protein belongs to the universal ribosomal protein uL16 family. As to quaternary structure, part of the 50S ribosomal subunit.

In terms of biological role, binds 23S rRNA and is also seen to make contacts with the A and possibly P site tRNAs. The sequence is that of Large ribosomal subunit protein uL16 from Nitrobacter hamburgensis (strain DSM 10229 / NCIMB 13809 / X14).